The following is a 60-amino-acid chain: Small ribosomal subunit protein bS21 (60 aa).

The segment at 41–60 (PEEKRKRKAIARRRQRSRRR) is disordered. Over residues 45 to 60 (RKRKAIARRRQRSRRR) the composition is skewed to basic residues.

Belongs to the bacterial ribosomal protein bS21 family.

The sequence is that of Small ribosomal subunit protein bS21 from Gloeothece citriformis (strain PCC 7424) (Cyanothece sp. (strain PCC 7424)).